A 247-amino-acid chain; its full sequence is Probable transcriptional regulatory protein HRM2_04000 (247 aa).

The protein belongs to the TACO1 family.

Its subcellular location is the cytoplasm. This Desulforapulum autotrophicum (strain ATCC 43914 / DSM 3382 / VKM B-1955 / HRM2) (Desulfobacterium autotrophicum) protein is Probable transcriptional regulatory protein HRM2_04000.